We begin with the raw amino-acid sequence, 337 residues long: tRNA N6-adenosine threonylcarbamoyltransferase (337 aa).

Positions 111 and 115 each coordinate Fe cation. Residues 134–138 (LVSGG), Asp-167, Gly-180, and Asn-272 contribute to the substrate site. Residue Asp-300 participates in Fe cation binding.

Belongs to the KAE1 / TsaD family. The cofactor is Fe(2+).

Its subcellular location is the cytoplasm. The catalysed reaction is L-threonylcarbamoyladenylate + adenosine(37) in tRNA = N(6)-L-threonylcarbamoyladenosine(37) in tRNA + AMP + H(+). Functionally, required for the formation of a threonylcarbamoyl group on adenosine at position 37 (t(6)A37) in tRNAs that read codons beginning with adenine. Is involved in the transfer of the threonylcarbamoyl moiety of threonylcarbamoyl-AMP (TC-AMP) to the N6 group of A37, together with TsaE and TsaB. TsaD likely plays a direct catalytic role in this reaction. This chain is tRNA N6-adenosine threonylcarbamoyltransferase, found in Aeromonas hydrophila subsp. hydrophila (strain ATCC 7966 / DSM 30187 / BCRC 13018 / CCUG 14551 / JCM 1027 / KCTC 2358 / NCIMB 9240 / NCTC 8049).